We begin with the raw amino-acid sequence, 177 residues long: Large ribosomal subunit protein uL6 (177 aa).

This sequence belongs to the universal ribosomal protein uL6 family. As to quaternary structure, part of the 50S ribosomal subunit.

Its function is as follows. This protein binds to the 23S rRNA, and is important in its secondary structure. It is located near the subunit interface in the base of the L7/L12 stalk, and near the tRNA binding site of the peptidyltransferase center. The protein is Large ribosomal subunit protein uL6 of Methanococcoides burtonii (strain DSM 6242 / NBRC 107633 / OCM 468 / ACE-M).